A 72-amino-acid chain; its full sequence is Crustacean hyperglycemic hormone (72 aa).

Residue glutamine 1 is modified to Pyrrolidone carboxylic acid. At phenylalanine 3 the chain carries D-phenylalanine. 3 disulfides stabilise this stretch: cysteine 7–cysteine 43, cysteine 23–cysteine 39, and cysteine 26–cysteine 52. Valine 72 is subject to Valine amide.

Produced by the medulla terminalis X-organ in the eyestalks and transported to the sinus gland where they are stored and released.

The protein resides in the secreted. In terms of biological role, hormone found in the sinus gland of isopods and decapods which controls the blood sugar level. Has a secretagogue action over the amylase released from the midgut gland. May act as a stress hormone and may be involved in the control of molting and reproduction. The polypeptide is Crustacean hyperglycemic hormone (Astacus astacus (Noble crayfish)).